The chain runs to 256 residues: Imidazole glycerol phosphate synthase subunit HisF (256 aa).

Residues Asp-12 and Asp-131 contribute to the active site.

The protein belongs to the HisA/HisF family. Heterodimer of HisH and HisF.

Its subcellular location is the cytoplasm. The catalysed reaction is 5-[(5-phospho-1-deoxy-D-ribulos-1-ylimino)methylamino]-1-(5-phospho-beta-D-ribosyl)imidazole-4-carboxamide + L-glutamine = D-erythro-1-(imidazol-4-yl)glycerol 3-phosphate + 5-amino-1-(5-phospho-beta-D-ribosyl)imidazole-4-carboxamide + L-glutamate + H(+). It functions in the pathway amino-acid biosynthesis; L-histidine biosynthesis; L-histidine from 5-phospho-alpha-D-ribose 1-diphosphate: step 5/9. Its function is as follows. IGPS catalyzes the conversion of PRFAR and glutamine to IGP, AICAR and glutamate. The HisF subunit catalyzes the cyclization activity that produces IGP and AICAR from PRFAR using the ammonia provided by the HisH subunit. This chain is Imidazole glycerol phosphate synthase subunit HisF, found in Bifidobacterium longum (strain DJO10A).